The chain runs to 465 residues: Histidine--tRNA ligase (465 aa).

It belongs to the class-II aminoacyl-tRNA synthetase family. In terms of assembly, homodimer.

The protein localises to the cytoplasm. The enzyme catalyses tRNA(His) + L-histidine + ATP = L-histidyl-tRNA(His) + AMP + diphosphate + H(+). This Pelagibacter ubique (strain HTCC1062) protein is Histidine--tRNA ligase (hisS).